A 585-amino-acid polypeptide reads, in one-letter code: uncharacterized protein (585 aa).

Positions 1–34 (MNAYVRDSESVYSESYPPENFISNEPEKSKDKDN) are disordered. Topologically, residues 1–89 (MNAYVRDSES…KRRLKSRHIQ (89 aa)) are cytoplasmic. A compositionally biased stretch (low complexity) spans 10 to 19 (SVYSESYPPE). The segment covering 25 to 34 (EPEKSKDKDN) has biased composition (basic and acidic residues). Residues 90 to 110 (MIGIGGAIGTGVWVGSSKSLY) form a helical membrane-spanning segment. The Extracellular segment spans residues 111-121 (RGGAASVLIDY). A helical transmembrane segment spans residues 122–142 (CIVGTMVFCTVYALGELAVAF). Residues 143–159 (PTRGSFVTHATRFIDES) lie on the Cytoplasmic side of the membrane. The chain crosses the membrane as a helical span at residues 160–180 (WGFALSWNYVFSFIVTIPLEL). Over 181-193 (TTGTMMIKYWTNL) the chain is Extracellular. Residues 194 to 214 (NSGIWVTVFIVFLFFINIFGV) traverse the membrane as a helical segment. Topologically, residues 215–221 (KGYGEME) are cytoplasmic. Residues 222 to 242 (FIMSTIKVVAMCGFIILGIII) form a helical membrane-spanning segment. At 243 to 271 (DCGGVPTDHRGYMGTHIFRENAFRHKFKG) the chain is on the extracellular side. The chain crosses the membrane as a helical span at residues 272–292 (FCAVFTSAAFSFSGTEYVGVA). Topologically, residues 293–313 (AAETENPAKAFPVAVRQTLFR) are cytoplasmic. Residues 314–334 (IAIFYILSLFIVSLLISGADP) form a helical membrane-spanning segment. Topologically, residues 335 to 361 (RLTSYHGVDASPFVLAIKDANIKALPS) are extracellular. A helical membrane pass occupies residues 362-382 (ILNAIILISVISSANAQLYAG). Over 383-407 (SRAIHSLGCNGFAPKCFTLVDREGR) the chain is Cytoplasmic. The helical transmembrane segment at 408 to 428 (PLVALLILFLFMFLGYLVETG) threads the bilayer. At 429 to 436 (QYDTVFDW) the chain is on the extracellular side. Residues 437–457 (MLSISGLGTLFCWGSICLAHI) traverse the membrane as a helical segment. Over 458–486 (RYRAAMKHQNRSLKEVGFVSPFNVYASYY) the chain is Cytoplasmic. The helical transmembrane segment at 487 to 507 (AFILVCLVLAAEFYVSIFPVG) threads the bilayer. Topologically, residues 508 to 511 (GKPD) are extracellular. The helical transmembrane segment at 512 to 532 (ASAFFENYLSAPVILVFFICH) threads the bilayer. Residues 533-585 (KLYYKTKRITLSNMDLETDFAYKTPVEEEEEEEKSAGSLSIKQRMKKLSDMMC) are Cytoplasmic-facing.

Belongs to the amino acid-polyamine-organocation (APC) superfamily.

The protein localises to the endoplasmic reticulum. It localises to the membrane. This is an uncharacterized protein from Schizosaccharomyces pombe (strain 972 / ATCC 24843) (Fission yeast).